The chain runs to 319 residues: Ferrochelatase (319 aa).

Residues His194 and Glu275 each contribute to the Fe cation site.

Belongs to the ferrochelatase family.

The protein resides in the cytoplasm. The enzyme catalyses heme b + 2 H(+) = protoporphyrin IX + Fe(2+). Its pathway is porphyrin-containing compound metabolism; protoheme biosynthesis; protoheme from protoporphyrin-IX: step 1/1. Its function is as follows. Catalyzes the ferrous insertion into protoporphyrin IX. The protein is Ferrochelatase of Vibrio vulnificus (strain YJ016).